A 126-amino-acid polypeptide reads, in one-letter code: Glycine cleavage system H protein (126 aa).

Positions 22–104 constitute a Lipoyl-binding domain; sequence VAYVGITDYA…YGEGWLIKMK (83 aa). The residue at position 63 (K63) is an N6-lipoyllysine.

It belongs to the GcvH family. The glycine cleavage system is composed of four proteins: P, T, L and H. (R)-lipoate is required as a cofactor.

Functionally, the glycine cleavage system catalyzes the degradation of glycine. The H protein shuttles the methylamine group of glycine from the P protein to the T protein. The protein is Glycine cleavage system H protein of Bacteroides fragilis (strain YCH46).